The primary structure comprises 751 residues: Catalase-peroxidase (751 aa).

Positions 92-240 (WHSAGTYRVT…VAAAHMGLIY (149 aa)) form a cross-link, tryptophyl-tyrosyl-methioninium (Trp-Tyr) (with M-266). The Proton acceptor role is filled by H93. Positions 240–266 (YVNPEGPDGVPDPIAAARDIRTTFHRM) form a cross-link, tryptophyl-tyrosyl-methioninium (Tyr-Met) (with W-92). H281 contacts heme b.

It belongs to the peroxidase family. Peroxidase/catalase subfamily. As to quaternary structure, homodimer or homotetramer. It depends on heme b as a cofactor. In terms of processing, formation of the three residue Trp-Tyr-Met cross-link is important for the catalase, but not the peroxidase activity of the enzyme.

Its subcellular location is the cytoplasm. The catalysed reaction is H2O2 + AH2 = A + 2 H2O. It carries out the reaction 2 H2O2 = O2 + 2 H2O. Bifunctional enzyme with both catalase and broad-spectrum peroxidase activity. This chain is Catalase-peroxidase, found in Phaeosphaeria nodorum (strain SN15 / ATCC MYA-4574 / FGSC 10173) (Glume blotch fungus).